The following is a 452-amino-acid chain: tRNA-2-methylthio-N(6)-dimethylallyladenosine synthase (452 aa).

An MTTase N-terminal domain is found at Lys-16–Thr-134. [4Fe-4S] cluster contacts are provided by Cys-25, Cys-61, Cys-95, Cys-171, Cys-175, and Cys-178. The region spanning Arg-157–Arg-387 is the Radical SAM core domain. The TRAM domain maps to Lys-390–Ile-452.

Belongs to the methylthiotransferase family. MiaB subfamily. As to quaternary structure, monomer. [4Fe-4S] cluster is required as a cofactor.

Its subcellular location is the cytoplasm. It catalyses the reaction N(6)-dimethylallyladenosine(37) in tRNA + (sulfur carrier)-SH + AH2 + 2 S-adenosyl-L-methionine = 2-methylsulfanyl-N(6)-dimethylallyladenosine(37) in tRNA + (sulfur carrier)-H + 5'-deoxyadenosine + L-methionine + A + S-adenosyl-L-homocysteine + 2 H(+). In terms of biological role, catalyzes the methylthiolation of N6-(dimethylallyl)adenosine (i(6)A), leading to the formation of 2-methylthio-N6-(dimethylallyl)adenosine (ms(2)i(6)A) at position 37 in tRNAs that read codons beginning with uridine. The sequence is that of tRNA-2-methylthio-N(6)-dimethylallyladenosine synthase from Clostridium novyi (strain NT).